A 507-amino-acid chain; its full sequence is Secreted lipase ARB_01498 (507 aa).

The N-terminal stretch at 1 to 21 (MFVQLLTYGLVAASTLQGVFA) is a signal peptide. Ser-196 (acyl-ester intermediate) is an active-site residue. 4 N-linked (GlcNAc...) asparagine glycosylation sites follow: Asn-262, Asn-321, Asn-358, and Asn-416.

The protein belongs to the type-B carboxylesterase/lipase family.

It localises to the secreted. The enzyme catalyses a triacylglycerol + H2O = a diacylglycerol + a fatty acid + H(+). The polypeptide is Secreted lipase ARB_01498 (Arthroderma benhamiae (strain ATCC MYA-4681 / CBS 112371) (Trichophyton mentagrophytes)).